We begin with the raw amino-acid sequence, 467 residues long: MLAKRIKWFHVLIAVVCVVGLIGFFHNHSLKKETVMNKVRTDSQYGNVEIATLVNDGKTFNYAVNYPVFKNEKMDSALKRFAEKEVRQFQKETKDVDQEHTTKRNELNVDYKIVHYAKQTVAIVFNEYKYIGGAHGQTVKKTFNYDFSKQAFLSIDDIFKEDADYLHKLSLIAYHELKKNKDIAADDALLKEGTAPKKENFSRFAIKEDYIELYFDTYQVAAGYLGEQSIAIKKSLLKDILKEQYIDKAKNKNKIKEQKPKHEVISLPKEETVDPNQKVIALTFDDGPNPATTNQILDSLKKYKGHATFFVLGSRVQYYPETLIRMLKEGNEVGNHSWSHPLLTRLSVKEALKQINDTQDIIEKISGYRPTLVRPPYGGINDELRSQMKMDVALWDVDPEDWKDRNKKTIVDRVMNQAGDGRTILIHDIYRTSADAADEIIKKLTDQGYQLVTVSQLEEVKKQREAK.

The helical transmembrane segment at 6–26 (IKWFHVLIAVVCVVGLIGFFH) threads the bilayer. In terms of domain architecture, NodB homology spans 278 to 452 (KVIALTFDDG…KLTDQGYQLV (175 aa)). The Proton acceptor role is filled by D285. Residues D286, H336, and H340 each contribute to the a divalent metal cation site. The active-site Proton donor is H427.

The protein in the N-terminal section; belongs to the RsiV family. In the C-terminal section; belongs to the polysaccharide deacetylase family.

The protein resides in the cell membrane. Its activity is regulated as follows. Activated by divalent metal cations; Mn(2+) is the most efficient, followed by Ca(2+) and Mg(2+). In contrast to PgdA from S.pneumoniae, these ions are not absolutely required for deacetylase activity. Its function is as follows. Catalyzes the deacetylation of N-acetylmuramic acid (MurNAc) residues in peptidoglycan, a modification that confers resistance to lysosyme. Is not able to deacetylate N-acetylglucosamine (GlcNAc) residues in peptidoglycan, but can deacylate chitin oligomers such as GlcNAc4 and GlcNAc5. Is essentially not active toward chitosan (partially deacetylated GlcNAc polymer) and has very low activity toward chitin (GlcNAc polymer). Does not deacetylate GlcNAc. In Bacillus subtilis (strain 168), this protein is Peptidoglycan-N-acetylmuramic acid deacetylase PdaC (pdaC).